We begin with the raw amino-acid sequence, 593 residues long: Pyruvate kinase isozyme A, chloroplastic (593 aa).

Residues 57 to 94 (DEPQSSPVLVSENGSGGVLSSATQEYGRNAAPGTDSSS) form a disordered region. Arg144 contacts substrate. The K(+) site is built by Asn146, Asp178, and Thr179. 146–149 (NMCH) is an ATP binding site. Glu343 contributes to the Mg(2+) binding site. Substrate is bound by residues Gly366, Asp367, and Ser399. Residue Asp367 participates in Mg(2+) binding.

The protein belongs to the pyruvate kinase family. Requires Mg(2+) as cofactor. The cofactor is K(+). Highest levels in roots. Also found in stems, leaves and flowers.

The protein localises to the plastid. It localises to the chloroplast. The catalysed reaction is pyruvate + ATP = phosphoenolpyruvate + ADP + H(+). Its pathway is carbohydrate degradation; glycolysis; pyruvate from D-glyceraldehyde 3-phosphate: step 5/5. This is Pyruvate kinase isozyme A, chloroplastic from Nicotiana tabacum (Common tobacco).